Consider the following 642-residue polypeptide: Threonine--tRNA ligase (642 aa).

The TGS domain maps to 1 to 61 (MPVITLPDGS…ENDAQLSIIT (61 aa)). The catalytic stretch occupies residues 243–534 (DHRKIGKQLD…LTEEFAGFFP (292 aa)). Lys286 is subject to N6-acetyllysine. Zn(2+) contacts are provided by Cys334, His385, and His511.

This sequence belongs to the class-II aminoacyl-tRNA synthetase family. In terms of assembly, homodimer. The cofactor is Zn(2+).

It is found in the cytoplasm. The catalysed reaction is tRNA(Thr) + L-threonine + ATP = L-threonyl-tRNA(Thr) + AMP + diphosphate + H(+). Its function is as follows. Catalyzes the attachment of threonine to tRNA(Thr) in a two-step reaction: L-threonine is first activated by ATP to form Thr-AMP and then transferred to the acceptor end of tRNA(Thr). Also edits incorrectly charged L-seryl-tRNA(Thr). This Shigella boydii serotype 18 (strain CDC 3083-94 / BS512) protein is Threonine--tRNA ligase.